The chain runs to 896 residues: MADTTVDKLATEVGKSTERLVEQFSQAGIKKSASDTVSETEKQQLLDFLKKQHGGDAAPTKMTLQRKSVSTLSVAGSGGQSKDVKVEVRKKRTFVKRDEAAEAELAAAAKAEEAKAAEAEAKAKAEAEAKAKVDAEAKVKAKAEAEAKAKAKVQTEKPAAETAEDKAAKAEEAKLLAAQDAVAKAKANEEASAAADEARRLAEENEKRWAEEEKARKEAEKSVDHHVTTSTEARAAEDTADANAEKRGRRPRKPSANAGNNANANAGAGKPGGKGKRGKDNRRDNRNSRNSRNTRSVAPESMDHAFTKPAAVVKAEVSIGETVSVAELASKMSIKATEIIKQMMKMGSMVTINQVLDQETAQLVAEEMGHKVILTRENELEHQVLADRNGDVKVEPRAPVVTIMGHVDHGKTSLLDYIRRAKVASGEAGGITQHIGAYHVETENGMITFLDTPGHAAFTAMRARGAKATDIVILVVAADDGVMPQTIEAIQHAKAGGVPLIVAVNKIDKPEADPDRVKSELSQHGVMSEDWGGNNMFVHVSAKDGTGIDELLEGILLEAEVLELQAVREGMAAGVVVESKLDKGRGPVATVLVQEGTLKQGDIVLCGLEYGKVRAMRDENGKAITEAGPSIPVEILGLSGVPSAGDEATVVRDERKAREVALYRQGKFRDVKLARQQKSKLENMFANMVEGEVQELNLVLKADVQGSLEAIADSLNSLSTDEVKVNIIARGVGGLTETDATLAAASNAIMVGFNVRADAQARKVVDSESVDLRYYSIIYQLIDEVRDAMSGMLAPEFKQEIIGLAEVRDVFKSPKIGAIAGCMVTEGTIKRSAPIRVLRDNIVIYEGELESLRRFKDDVSDVRNGMECGIGVKNYNDVRVGDQIEVFETVEIARTL.

Residues 117–174 (AEAEAKAKAEAEAKAKVDAEAKVKAKAEAEAKAKAKVQTEKPAAETAEDKAAKAEEAK) are compositionally biased toward basic and acidic residues. Residues 117-303 (AEAEAKAKAE…TRSVAPESMD (187 aa)) are disordered. Residues 175-195 (LLAAQDAVAKAKANEEASAAA) are compositionally biased toward low complexity. Basic and acidic residues predominate over residues 196–227 (DEARRLAEENEKRWAEEEKARKEAEKSVDHHV). Residues 254 to 268 (PSANAGNNANANAGA) are compositionally biased toward low complexity. Residues 396 to 563 (PRAPVVTIMG…GILLEAEVLE (168 aa)) enclose the tr-type G domain. The tract at residues 405–412 (GHVDHGKT) is G1. 405–412 (GHVDHGKT) provides a ligand contact to GTP. The interval 430-434 (GITQH) is G2. Positions 451–454 (DTPG) are G3. Residues 451 to 455 (DTPGH) and 505 to 508 (NKID) each bind GTP. The interval 505-508 (NKID) is G4. The tract at residues 541–543 (SAK) is G5.

Belongs to the TRAFAC class translation factor GTPase superfamily. Classic translation factor GTPase family. IF-2 subfamily.

The protein localises to the cytoplasm. Its function is as follows. One of the essential components for the initiation of protein synthesis. Protects formylmethionyl-tRNA from spontaneous hydrolysis and promotes its binding to the 30S ribosomal subunits. Also involved in the hydrolysis of GTP during the formation of the 70S ribosomal complex. This chain is Translation initiation factor IF-2, found in Shewanella pealeana (strain ATCC 700345 / ANG-SQ1).